The primary structure comprises 691 residues: UvrABC system protein C (691 aa).

The GIY-YIG domain maps to 20–97 (STSGVYLWKD…IKKHTPRYNI (78 aa)). The UVR domain maps to 204–239 (DATVARLEKRMKRAVRQEAFEAAARIRDDIQAIRCI). The disordered stretch occupies residues 662–691 (RSTTAPVREEYKEHEHDPQGESPGPGRKTD). Basic and acidic residues predominate over residues 668-680 (VREEYKEHEHDPQ).

The protein belongs to the UvrC family. In terms of assembly, interacts with UvrB in an incision complex.

The protein resides in the cytoplasm. Its function is as follows. The UvrABC repair system catalyzes the recognition and processing of DNA lesions. UvrC both incises the 5' and 3' sides of the lesion. The N-terminal half is responsible for the 3' incision and the C-terminal half is responsible for the 5' incision. This is UvrABC system protein C from Treponema pallidum (strain Nichols).